Here is a 304-residue protein sequence, read N- to C-terminus: Ornithine carbamoyltransferase (304 aa).

Residues 51–54 (STRT), Gln-78, Arg-102, and 129–132 (HPVQ) contribute to the carbamoyl phosphate site. Residues Asn-157, Asp-221, and 225-226 (SM) each bind L-ornithine. Carbamoyl phosphate is bound by residues 261-262 (CL) and Arg-289.

The protein belongs to the aspartate/ornithine carbamoyltransferase superfamily. OTCase family.

Its subcellular location is the cytoplasm. It catalyses the reaction carbamoyl phosphate + L-ornithine = L-citrulline + phosphate + H(+). Its pathway is amino-acid degradation; L-arginine degradation via ADI pathway; carbamoyl phosphate from L-arginine: step 2/2. In terms of biological role, reversibly catalyzes the transfer of the carbamoyl group from carbamoyl phosphate (CP) to the N(epsilon) atom of ornithine (ORN) to produce L-citrulline. This is Ornithine carbamoyltransferase from Campylobacter curvus (strain 525.92).